The primary structure comprises 239 residues: C-8 sterol isomerase erg2 (239 aa).

A glycan (N-linked (GlcNAc...) asparagine) is linked at Asn-11. The chain crosses the membrane as a helical span at residues 27-47; it reads KFGFLAVFVAIFAALYSYLDA. A glycan (N-linked (GlcNAc...) asparagine) is linked at Asn-73.

It belongs to the ERG2 family.

The protein resides in the endoplasmic reticulum membrane. It carries out the reaction fecosterol = episterol. It participates in steroid metabolism; ergosterol biosynthesis. Functionally, C-8 sterol isomerase; part of the third module of ergosterol biosynthesis pathway that includes the late steps of the pathway. Erg2 catalyzes the reaction which results in unsaturation at C-7 in the B ring of sterols and thus converts fecosterol to episterol. The third module or late pathway involves the ergosterol synthesis itself through consecutive reactions that mainly occur in the endoplasmic reticulum (ER) membrane. Firstly, the squalene synthase erg9 catalyzes the condensation of 2 farnesyl pyrophosphate moieties to form squalene, which is the precursor of all steroids. Squalene synthase is crucial for balancing the incorporation of farnesyl diphosphate (FPP) into sterol and nonsterol isoprene synthesis. Secondly, squalene is converted into lanosterol by the consecutive action of the squalene epoxidase erg1 and the lanosterol synthase erg7. Then, the delta(24)-sterol C-methyltransferase erg6 methylates lanosterol at C-24 to produce eburicol. Eburicol is the substrate of the sterol 14-alpha demethylase encoded by cyp51A and cyp51B, to yield 4,4,24-trimethyl ergosta-8,14,24(28)-trienol. The C-14 reductase erg24 then reduces the C14=C15 double bond which leads to 4,4-dimethylfecosterol. A sequence of further demethylations at C-4, involving the C-4 demethylation complex containing the C-4 methylsterol oxidases erg25A or erg25B, the sterol-4-alpha-carboxylate 3-dehydrogenase erg26 and the 3-keto-steroid reductase erg27, leads to the production of fecosterol via 4-methylfecosterol. The C-8 sterol isomerase erg2 then catalyzes the reaction which results in unsaturation at C-7 in the B ring of sterols and thus converts fecosterol to episterol. The sterol-C5-desaturase erg3B then catalyzes the introduction of a C-5 double bond in the B ring to produce 5-dehydroepisterol. The 2 other sterol-C5-desaturases, erg3A and erg3C, seem to be less important in ergosterol biosynthesis. The C-22 sterol desaturase erg5 further converts 5-dehydroepisterol into ergosta-5,7,22,24(28)-tetraen-3beta-ol by forming the C-22(23) double bond in the sterol side chain. Finally, ergosta-5,7,22,24(28)-tetraen-3beta-ol is substrate of the C-24(28) sterol reductases erg4A and erg4B to produce ergosterol. Possible alternative sterol biosynthetic pathways might exist from fecosterol to ergosterol, depending on the activities of the erg3 isoforms. This Aspergillus fumigatus (strain ATCC MYA-4609 / CBS 101355 / FGSC A1100 / Af293) (Neosartorya fumigata) protein is C-8 sterol isomerase erg2.